Reading from the N-terminus, the 222-residue chain is Sugar fermentation stimulation protein homolog (222 aa).

It belongs to the SfsA family.

This Thermotoga sp. (strain RQ2) protein is Sugar fermentation stimulation protein homolog.